The primary structure comprises 1164 residues: DNA-directed RNA polymerase 132 kDa polypeptide (1164 aa).

The protein belongs to the RNA polymerase beta chain family. As to quaternary structure, the DNA-dependent RNA polymerase used for intermediate and late genes expression consists of eight subunits (147) kDa, (133) kDa, (35) kDa, (30) kDa, (22) kDa, (19) kDa, (18) kDa and (7) kDa totalling more than 500 kDa in mass. The same holoenzyme, with the addition of the transcription-specificity factor RAP94, is used for early gene expression.

The protein resides in the virion. It carries out the reaction RNA(n) + a ribonucleoside 5'-triphosphate = RNA(n+1) + diphosphate. Its function is as follows. Part of the DNA-dependent RNA polymerase which catalyzes the transcription of viral DNA into RNA using the four ribonucleoside triphosphates as substrates. Responsible for the transcription of early, intermediate and late genes. DNA-dependent RNA polymerase associates with the early transcription factor (ETF), itself composed of D6 and A7, thereby allowing the early genes transcription. Late transcription, and probably also intermediate transcription, require newly synthesized RNA polymerase. The protein is DNA-directed RNA polymerase 132 kDa polypeptide (RPO132) of Camelus.